The sequence spans 415 residues: Multidrug resistance protein MdtA (415 aa).

Positions 1-21 (MKGSYKSRWVIVIVVVIAAIA) are cleaved as a signal peptide. Polar residues predominate over residues 31–47 (DSQSAAPGATKQAQQSP). 2 disordered regions span residues 31–60 (DSQS…GPLA) and 392–415 (EAQS…GARS). Residues 399-415 (PEEKATSREYAKKGARS) are compositionally biased toward basic and acidic residues.

Belongs to the membrane fusion protein (MFP) (TC 8.A.1) family. In terms of assembly, part of a tripartite efflux system composed of MdtA, MdtB and MdtC.

It is found in the cell inner membrane. Functionally, the MdtABC tripartite complex confers resistance against novobiocin and deoxycholate. The chain is Multidrug resistance protein MdtA from Escherichia coli O157:H7.